Reading from the N-terminus, the 222-residue chain is Cytidylate kinase (222 aa).

An ATP-binding site is contributed by 10–18 (GPSASGKGT).

This sequence belongs to the cytidylate kinase family. Type 1 subfamily.

Its subcellular location is the cytoplasm. The catalysed reaction is CMP + ATP = CDP + ADP. It catalyses the reaction dCMP + ATP = dCDP + ADP. The chain is Cytidylate kinase from Chromobacterium violaceum (strain ATCC 12472 / DSM 30191 / JCM 1249 / CCUG 213 / NBRC 12614 / NCIMB 9131 / NCTC 9757 / MK).